We begin with the raw amino-acid sequence, 469 residues long: Uronate isomerase (469 aa).

The protein belongs to the metallo-dependent hydrolases superfamily. Uronate isomerase family.

It catalyses the reaction D-glucuronate = D-fructuronate. The enzyme catalyses aldehydo-D-galacturonate = keto-D-tagaturonate. It participates in carbohydrate metabolism; pentose and glucuronate interconversion. The polypeptide is Uronate isomerase (Rhizobium meliloti (strain 1021) (Ensifer meliloti)).